The primary structure comprises 863 residues: Receptor-like protein 9DC1 (863 aa).

Positions 1-21 (MGCVKLVFFMLYVFLFQLVSS) are cleaved as a signal peptide. At 22 to 812 (SSLPHLCPED…EEDSPMISWQ (791 aa)) the chain is on the extracellular side. The interval 24 to 90 (LPHLCPEDQA…GVHCDETTGQ (67 aa)) is N-cap. N-linked (GlcNAc...) asparagine glycans are attached at residues Asn71 and Asn108. The LRR 1; degenerate repeat unit spans residues 91–114 (VIALDLRCSQLQGKFHSNSSLFQL). LRR repeat units follow at residues 115 to 138 (SNLK…KFGE) and 140 to 163 (SDLT…ISHL). The LRR 4; degenerate repeat unit spans residues 164 to 190 (SKLHVLLIGDQYGLSIVPHNFEPLLKN). Asn190, Asn203, and Asn211 each carry an N-linked (GlcNAc...) asparagine glycan. 6 LRR repeats span residues 191-213 (LTQL…SNFS), 214-237 (SHLT…VFHL), 240-262 (LEFL…KWNS), 264-286 (ASLM…SFSH), 287-311 (LTSL…LWNL), and 312-336 (TNIE…IFEK). The N-linked (GlcNAc...) asparagine glycan is linked to Asn261. Asn299 and Asn310 each carry an N-linked (GlcNAc...) asparagine glycan. The LRR 11; degenerate repeat unit spans residues 337–357 (LKKLSLFRNDNLDGGLEFLSF). LRR repeat units follow at residues 358–382 (NTQL…ISGL), 383–406 (QNLE…IFSL), 408–428 (SLVE…EFKS), 429–452 (KTLS…LLNQ), 454–476 (NLQL…ICNL), 477–500 (KTLI…VVER), 502–524 (EYLS…TFSV), 525–549 (GNIL…MINC), 551–572 (YLTL…WLGY), 573–597 (LFQL…GNTN), 599–623 (FMGL…ILGN), 667–690 (LDSN…IIGD), 691–714 (LVGL…SFQN), 715–739 (LSVL…LASL), and 741–759 (FLEV…IPKG). Asn378, Asn396, and Asn416 each carry an N-linked (GlcNAc...) asparagine glycan. A glycan (N-linked (GlcNAc...) asparagine) is linked at Asn464. Residue Asn519 is glycosylated (N-linked (GlcNAc...) asparagine). Asn563 is a glycosylation site (N-linked (GlcNAc...) asparagine). N-linked (GlcNAc...) asparagine glycans are attached at residues Asn674, Asn698, and Asn714. Asn746 and Asn767 each carry an N-linked (GlcNAc...) asparagine glycan. A C-cap/acidic domain region spans residues 760–812 (KQFDSFGNTSYQGNDGLRGFPLSKLCGGEDQVTTPAELDQEEEEEDSPMISWQ). Residues 813–833 (GVLVGYGCGLVIGLSVIYIMW) traverse the membrane as a helical segment. The Cytoplasmic portion of the chain corresponds to 834–863 (STQYPAWFSRMDLKLEHIITTKMKKHKKRY).

It belongs to the RLP family.

It is found in the cell membrane. Its function is as follows. Involved in plant defense. Confers resistance to the fungal pathogen C.fulvum through recognition of the AVR9 elicitor protein. This Solanum pimpinellifolium (Currant tomato) protein is Receptor-like protein 9DC1.